The sequence spans 187 residues: dCTP deaminase (187 aa).

DCTP is bound by residues 107 to 112, 131 to 133, Gln152, Tyr166, Lys175, and Gln176; these read KSTYAR and TLE. Catalysis depends on Glu133, which acts as the Proton donor/acceptor.

It belongs to the dCTP deaminase family. Homotrimer.

It carries out the reaction dCTP + H2O + H(+) = dUTP + NH4(+). The protein operates within pyrimidine metabolism; dUMP biosynthesis; dUMP from dCTP (dUTP route): step 1/2. Catalyzes the deamination of dCTP to dUTP. This Ehrlichia canis (strain Jake) protein is dCTP deaminase.